A 481-amino-acid polypeptide reads, in one-letter code: Ankyrin repeat, SAM and basic leucine zipper domain-containing protein 1 (481 aa).

The segment covering 1 to 10 (MASGALRGLA) has biased composition (low complexity). Residues 1-23 (MASGALRGLAVAGGGESSDSEDD) form a disordered region. Phosphoserine is present on residues Ser17, Ser18, and Ser20. ANK repeat units lie at residues 45-74 (EKSE…SVDS), 78-107 (YGWT…NASF), 110-144 (DKQT…DPNI), 148-177 (RLMT…EVNA), 181-210 (NGYT…NKML), and 214-243 (DGKI…PLEG). An SAM domain is found at 272–334 (SYTAFGDLEI…KILSALKELE (63 aa)).

Interacts with DDX4, PIWIL1, RANBP9 and TDRD1.

Its subcellular location is the cytoplasm. Functionally, plays a central role during spermatogenesis by repressing transposable elements and preventing their mobilization, which is essential for the germline integrity. Acts via the piRNA metabolic process, which mediates the repression of transposable elements during meiosis by forming complexes composed of piRNAs and Piwi proteins and governs the methylation and subsequent repression of transposons. Its association with pi-bodies suggests a participation in the primary piRNAs metabolic process. Required prior to the pachytene stage to facilitate the production of multiple types of piRNAs, including those associated with repeats involved in the regulation of retrotransposons. May act by mediating protein-protein interactions during germ cell maturation. This chain is Ankyrin repeat, SAM and basic leucine zipper domain-containing protein 1 (ASZ1), found in Eulemur macaco macaco (Black lemur).